The chain runs to 395 residues: Elongation factor Tu (395 aa).

Positions 10–204 (KPHVNIGTIG…AVDEYIPTPQ (195 aa)) constitute a tr-type G domain. The segment at 19–26 (GHVDHGKT) is G1. 19–26 (GHVDHGKT) is a binding site for GTP. T26 provides a ligand contact to Mg(2+). Residues 60-64 (GITIS) are G2. Positions 81-84 (DCPG) are G3. GTP contacts are provided by residues 81-85 (DCPGH) and 136-139 (NKCD). The segment at 136 to 139 (NKCD) is G4. Positions 174–176 (SAL) are G5.

The protein belongs to the TRAFAC class translation factor GTPase superfamily. Classic translation factor GTPase family. EF-Tu/EF-1A subfamily. Monomer.

The protein resides in the cytoplasm. The catalysed reaction is GTP + H2O = GDP + phosphate + H(+). Its function is as follows. GTP hydrolase that promotes the GTP-dependent binding of aminoacyl-tRNA to the A-site of ribosomes during protein biosynthesis. The protein is Elongation factor Tu of Geobacillus sp. (strain WCH70).